A 439-amino-acid chain; its full sequence is Methylenetetrahydrofolate--tRNA-(uracil-5-)-methyltransferase TrmFO (439 aa).

9–14 (GAGLAG) serves as a coordination point for FAD.

This sequence belongs to the MnmG family. TrmFO subfamily. Requires FAD as cofactor.

The protein resides in the cytoplasm. The enzyme catalyses uridine(54) in tRNA + (6R)-5,10-methylene-5,6,7,8-tetrahydrofolate + NADH + H(+) = 5-methyluridine(54) in tRNA + (6S)-5,6,7,8-tetrahydrofolate + NAD(+). It carries out the reaction uridine(54) in tRNA + (6R)-5,10-methylene-5,6,7,8-tetrahydrofolate + NADPH + H(+) = 5-methyluridine(54) in tRNA + (6S)-5,6,7,8-tetrahydrofolate + NADP(+). Catalyzes the folate-dependent formation of 5-methyl-uridine at position 54 (M-5-U54) in all tRNAs. The chain is Methylenetetrahydrofolate--tRNA-(uracil-5-)-methyltransferase TrmFO from Lactobacillus delbrueckii subsp. bulgaricus (strain ATCC BAA-365 / Lb-18).